The primary structure comprises 189 residues: MSGIDINHKYDRKVRRTEPKSQDVYLRLLVKLYRFLQRRTNKKFNRIILKRLFMSKINRPPLSLQRIARFFKAANQPESTVVVVGTVTDDARLLVVPKLTLCALHVTQTARERILKAGGEVLTFDQLALKSPTGKNTLLLQGKRTARTACKHFGKAPGVPHSHTRPYVRSKGRKFERARGRRSSCGYKK.

Belongs to the eukaryotic ribosomal protein eL18 family.

Its subcellular location is the cytoplasm. The protein is Large ribosomal subunit protein eL18 (RpL18) of Drosophila pseudoobscura pseudoobscura (Fruit fly).